A 116-amino-acid polypeptide reads, in one-letter code: Large ribosomal subunit protein bL19 (116 aa).

The protein belongs to the bacterial ribosomal protein bL19 family.

Its function is as follows. This protein is located at the 30S-50S ribosomal subunit interface and may play a role in the structure and function of the aminoacyl-tRNA binding site. The chain is Large ribosomal subunit protein bL19 from Pseudomonas aeruginosa (strain LESB58).